The primary structure comprises 516 residues: Maturase K (516 aa).

The protein belongs to the intron maturase 2 family. MatK subfamily.

It localises to the plastid. The protein resides in the chloroplast. In terms of biological role, usually encoded in the trnK tRNA gene intron. Probably assists in splicing its own and other chloroplast group II introns. The chain is Maturase K from Galanthus nivalis (Common snowdrop).